Here is a 113-residue protein sequence, read N- to C-terminus: Ig kappa chain V-II region MOPC 511 (113 aa).

The framework-1 stretch occupies residues Asp1–Cys23. A disulfide bridge links Cys23 with Cys93. The tract at residues Arg24–Asn39 is complementarity-determining-1. Positions Trp40–Tyr54 are framework-2. Residues Leu55–Ser61 form a complementarity-determining-2 region. The framework-3 stretch occupies residues Gly62–Cys93. The interval Gln94 to Thr102 is complementarity-determining-3. Residues Phe103–Lys112 are framework-4.

The chain is Ig kappa chain V-II region MOPC 511 from Mus musculus (Mouse).